Reading from the N-terminus, the 177-residue chain is Probable DNA-directed RNA polymerase subunit delta (177 aa).

The HTH HARE-type domain maps to 14–83 (LSMIEVARAI…GENKWGLRSW (70 aa)). Composition is skewed to acidic residues over residues 117 to 134 (GDDD…DEDN) and 142 to 157 (EYDD…EVES). A disordered region spans residues 117-164 (GDDDAIDYGHDDPEDEDNYPGSVSSEYDDENPDDEKDEVESYDQKSTK).

This sequence belongs to the RpoE family. RNAP is composed of a core of 2 alpha, a beta and a beta' subunits. The core is associated with a delta subunit and one of several sigma factors.

In terms of biological role, participates in both the initiation and recycling phases of transcription. In the presence of the delta subunit, RNAP displays an increased specificity of transcription, a decreased affinity for nucleic acids, and an increased efficiency of RNA synthesis because of enhanced recycling. The protein is Probable DNA-directed RNA polymerase subunit delta of Streptococcus suis (strain 98HAH33).